A 147-amino-acid polypeptide reads, in one-letter code: Phospholipase A2 inhibitor subunit A (147 aa).

One can recognise a C-type lectin domain in the interval 62 to 143 (EICRQAGGRI…DDNLLVVCEF (82 aa)). 2 disulfides stabilise this stretch: Cys64-Cys141 and Cys119-Cys133. A glycan (N-linked (GlcNAc...) asparagine) is linked at Asn103.

This sequence belongs to the alpha-type phospholipase A2 inhibitor family. Homotrimer; non-covalently linked. Post-translationally, glycosylated. Expressed by the liver.

The protein resides in the secreted. Inhibits the enzymatic activity of the acidic phospholipase A2 (PLA2). This chain is Phospholipase A2 inhibitor subunit A, found in Gloydius brevicaudus siniticus (Chinese mamushi).